Here is a 3127-residue protein sequence, read N- to C-terminus: Probable polyketide synthase 33 (3127 aa).

The region spanning 24–457 is the Ketosynthase family 3 (KS3) domain; that stretch reads SGDVAVVGIG…GSNVCLILSE (434 aa). Residues C196, H335, and H380 each act as for beta-ketoacyl synthase activity in the active site. An acyl/malonyl transferase region spans residues 660–693; the sequence is GVSADIIIGHSLGEISSAYCSGMIDFQTLCYLTY. S670 acts as the For acyl/malonyl transferase activity in catalysis. The tract at residues 958 to 1080 is N-terminal hotdog fold; it reads GPSIHSLGNN…GNFSLFKHNI (123 aa). In terms of domain architecture, PKS/mFAS DH spans 958-1257; that stretch reads GPSIHSLGNN…CTIVGSNPDS (300 aa). Catalysis depends on H992, which acts as the Proton acceptor; for dehydratase activity. The segment at 1096–1257 is C-terminal hotdog fold; it reads NFTTISKQDF…CTIVGSNPDS (162 aa). The Proton donor; for dehydratase activity role is filled by D1168. Positions 1369 to 1394 are disordered; the sequence is SNNNNNNNNNNNNNNNNNNNNKNNGY. The segment covering 1370-1394 has biased composition (low complexity); the sequence is NNNNNNNNNNNNNNNNNNNNKNNGY. The 78-residue stretch at 2539 to 2616 folds into the Carrier domain; that stretch reads SNNEIIRSTI…QSIEIIKSAH (78 aa). S2576 is subject to O-(pantetheine 4'-phosphoryl)serine. Positions 2617–2659 are disordered; the sequence is NKNNNNNNINNNNNNNNNNNNNNNNNNNNNNNNNNNNNNNNNN. The stretch at 2617–2671 forms a coiled coil; the sequence is NKNNNNNNINNNNNNNNNNNNNNNNNNNNNNNNNNNNNNNNNNLVKKEQQSLDEF. The chain crosses the membrane as a helical span at residues 2937 to 2957; that stretch reads VLTLYNIPITIFIAILIIDIF.

It depends on pantetheine 4'-phosphate as a cofactor.

The protein localises to the membrane. Probable polyketide synthase. This chain is Probable polyketide synthase 33 (pks33), found in Dictyostelium discoideum (Social amoeba).